The chain runs to 186 residues: Putative adenylate kinase (186 aa).

Residues Gly10, Gly12, Lys13, Thr14, and Ser15 each contribute to the ATP site. Residues 30 to 53 (HLNELIKEEHLYTEVDEKRDSVVA) are NMP. The tract at residues 108-118 (KRGYSEEKVNE) is LID. ATP is bound at residue Arg109.

This sequence belongs to the adenylate kinase family. AK6 subfamily. Interacts with uS11. Not a structural component of 40S pre-ribosomes, but transiently interacts with them by binding to uS11.

It carries out the reaction AMP + ATP = 2 ADP. The enzyme catalyses ATP + H2O = ADP + phosphate + H(+). Its function is as follows. Broad-specificity nucleoside monophosphate (NMP) kinase that catalyzes the reversible transfer of the terminal phosphate group between nucleoside triphosphates and monophosphates. Also has ATPase activity. Involved in the late maturation steps of the 30S ribosomal particles, specifically 16S rRNA maturation. While NMP activity is not required for ribosome maturation, ATPase activity is. Associates transiently with small ribosomal subunit protein uS11. ATP hydrolysis breaks the interaction with uS11. May temporarily remove uS11 from the ribosome to enable a conformational change of the ribosomal RNA that is needed for the final maturation step of the small ribosomal subunit. The sequence is that of Putative adenylate kinase from Methanosarcina acetivorans (strain ATCC 35395 / DSM 2834 / JCM 12185 / C2A).